A 401-amino-acid polypeptide reads, in one-letter code: Formate-dependent phosphoribosylglycinamide formyltransferase (401 aa).

N(1)-(5-phospho-beta-D-ribosyl)glycinamide contacts are provided by residues E22–L23 and E82. ATP is bound by residues R115, K157, S162–Q167, E197–I200, and E205. The region spanning R120 to L315 is the ATP-grasp domain. E274 and E286 together coordinate Mg(2+). N(1)-(5-phospho-beta-D-ribosyl)glycinamide contacts are provided by residues D293, K362, and R369–R370.

Belongs to the PurK/PurT family. As to quaternary structure, homodimer.

The catalysed reaction is N(1)-(5-phospho-beta-D-ribosyl)glycinamide + formate + ATP = N(2)-formyl-N(1)-(5-phospho-beta-D-ribosyl)glycinamide + ADP + phosphate + H(+). It functions in the pathway purine metabolism; IMP biosynthesis via de novo pathway; N(2)-formyl-N(1)-(5-phospho-D-ribosyl)glycinamide from N(1)-(5-phospho-D-ribosyl)glycinamide (formate route): step 1/1. Its function is as follows. Involved in the de novo purine biosynthesis. Catalyzes the transfer of formate to 5-phospho-ribosyl-glycinamide (GAR), producing 5-phospho-ribosyl-N-formylglycinamide (FGAR). Formate is provided by PurU via hydrolysis of 10-formyl-tetrahydrofolate. The polypeptide is Formate-dependent phosphoribosylglycinamide formyltransferase (Cupriavidus pinatubonensis (strain JMP 134 / LMG 1197) (Cupriavidus necator (strain JMP 134))).